The chain runs to 37 residues: Large ribosomal subunit protein bL36A (37 aa).

This sequence belongs to the bacterial ribosomal protein bL36 family.

The sequence is that of Large ribosomal subunit protein bL36A from Actinobacillus pleuropneumoniae serotype 3 (strain JL03).